We begin with the raw amino-acid sequence, 226 residues long: ATP-dependent dethiobiotin synthetase BioD (226 aa).

12–17 (GVGKTV) lines the ATP pocket. Thr-16 lines the Mg(2+) pocket. Lys-37 is a catalytic residue. Residue Thr-41 participates in substrate binding. Residues Asp-49, 108 to 111 (EGAG), 169 to 170 (GS), and 197 to 199 (PAG) each bind ATP. Mg(2+)-binding residues include Asp-49 and Glu-108.

Belongs to the dethiobiotin synthetase family. In terms of assembly, homodimer. The cofactor is Mg(2+).

The protein localises to the cytoplasm. It carries out the reaction (7R,8S)-7,8-diammoniononanoate + CO2 + ATP = (4R,5S)-dethiobiotin + ADP + phosphate + 3 H(+). It functions in the pathway cofactor biosynthesis; biotin biosynthesis; biotin from 7,8-diaminononanoate: step 1/2. In terms of biological role, catalyzes a mechanistically unusual reaction, the ATP-dependent insertion of CO2 between the N7 and N8 nitrogen atoms of 7,8-diaminopelargonic acid (DAPA, also called 7,8-diammoniononanoate) to form a ureido ring. The chain is ATP-dependent dethiobiotin synthetase BioD from Mycobacterium bovis (strain ATCC BAA-935 / AF2122/97).